A 161-amino-acid polypeptide reads, in one-letter code: MSEFTHINEQGNAKMIDVSEKEITKRTATAHSSITVNQDIYQQIVDHTNKKGNVLNTAQIAGIMAAKNTSTIIPMCHPLSLTGIDIAFEWDTTSSYTLNIEATVSTSGKTGVEMEALTAASATALTVYDMTKALDKGMVIGETYLLTKSGGKSGDYRRESK.

Substrate contacts are provided by residues 75–77 (MCH) and 114–115 (ME). Asp129 is an active-site residue.

Belongs to the MoaC family. Homohexamer; trimer of dimers.

The enzyme catalyses (8S)-3',8-cyclo-7,8-dihydroguanosine 5'-triphosphate = cyclic pyranopterin phosphate + diphosphate. Its pathway is cofactor biosynthesis; molybdopterin biosynthesis. Its function is as follows. Catalyzes the conversion of (8S)-3',8-cyclo-7,8-dihydroguanosine 5'-triphosphate to cyclic pyranopterin monophosphate (cPMP). This Staphylococcus carnosus (strain TM300) protein is Cyclic pyranopterin monophosphate synthase.